The following is a 447-amino-acid chain: Phosphoglucosamine mutase (447 aa).

Serine 103 functions as the Phosphoserine intermediate in the catalytic mechanism. Mg(2+) is bound by residues serine 103, aspartate 242, aspartate 244, and aspartate 246. Serine 103 bears the Phosphoserine mark.

The protein belongs to the phosphohexose mutase family. The cofactor is Mg(2+). Post-translationally, activated by phosphorylation.

It catalyses the reaction alpha-D-glucosamine 1-phosphate = D-glucosamine 6-phosphate. Catalyzes the conversion of glucosamine-6-phosphate to glucosamine-1-phosphate. The protein is Phosphoglucosamine mutase of Paracoccus denitrificans (strain Pd 1222).